The following is a 429-amino-acid chain: Histidinol dehydrogenase (429 aa).

Residues Y130, Q191, and N214 each coordinate NAD(+). S237, Q259, and H262 together coordinate substrate. Residues Q259 and H262 each contribute to the Zn(2+) site. Active-site proton acceptor residues include E327 and H328. Substrate-binding residues include H328, D361, E415, and H420. D361 is a binding site for Zn(2+). H420 contacts Zn(2+).

Belongs to the histidinol dehydrogenase family. It depends on Zn(2+) as a cofactor.

The enzyme catalyses L-histidinol + 2 NAD(+) + H2O = L-histidine + 2 NADH + 3 H(+). The protein operates within amino-acid biosynthesis; L-histidine biosynthesis; L-histidine from 5-phospho-alpha-D-ribose 1-diphosphate: step 9/9. Functionally, catalyzes the sequential NAD-dependent oxidations of L-histidinol to L-histidinaldehyde and then to L-histidine. This Neisseria meningitidis serogroup B (strain ATCC BAA-335 / MC58) protein is Histidinol dehydrogenase.